Here is a 170-residue protein sequence, read N- to C-terminus: uncharacterized protein (170 aa).

The protein belongs to the mimivirus L223/L227/L812 family.

This is an uncharacterized protein from Acanthamoeba polyphaga mimivirus (APMV).